Here is a 212-residue protein sequence, read N- to C-terminus: GTP cyclohydrolase 1 (212 aa).

Residues Cys-103, His-106, and Cys-174 each contribute to the Zn(2+) site.

It belongs to the GTP cyclohydrolase I family. Toroid-shaped homodecamer, composed of two pentamers of five dimers.

The catalysed reaction is GTP + H2O = 7,8-dihydroneopterin 3'-triphosphate + formate + H(+). Its pathway is cofactor biosynthesis; 7,8-dihydroneopterin triphosphate biosynthesis; 7,8-dihydroneopterin triphosphate from GTP: step 1/1. This Caulobacter vibrioides (strain ATCC 19089 / CIP 103742 / CB 15) (Caulobacter crescentus) protein is GTP cyclohydrolase 1.